The following is a 771-amino-acid chain: Endoplasmin homolog (771 aa).

The first 24 residues, 1 to 24, serve as a signal peptide directing secretion; the sequence is MANSSLLRVVLVALLLLGSVTVSA. 3 residues coordinate ATP: Asn63, Asp109, and Phe160. An N-linked (GlcNAc...) asparagine glycan is attached at Asn63. The disordered stretch occupies residues 253-282; sequence TAATPEPAAEEGSLDEGAVEEDPDKEGDTQ. Positions 260–277 are enriched in acidic residues; it reads AAEEGSLDEGAVEEDPDK. Asn306 and Asn402 each carry an N-linked (GlcNAc...) asparagine glycan. The tract at residues 727–771 is disordered; it reads ADDSLLPPDDAEYTVSDTEAEEEEEQPKVDANADEEAEAVGEDDL. Residues 758–771 are compositionally biased toward acidic residues; the sequence is NADEEAEAVGEDDL. Residues 768–771 carry the Prevents secretion from ER motif; it reads EDDL.

Belongs to the heat shock protein 90 family. As to quaternary structure, homotetramer.

The protein localises to the endoplasmic reticulum. In terms of biological role, molecular chaperone that functions in the processing and transport of secreted proteins. Required for the synthesis of lipophosphoglycan (LPG), a cell surface glycoconjugate. Necessary for the attachment of the galactosyl residue to the mannose within the phosphoglycan repeats of the nascent LPG chain. Also required for addition of phosphoglycan to acid phosphatase. Not required for normal growth. Has ATPase activity. Binds heparin with micromolar affinity which may facilitate infection of host cells. The chain is Endoplasmin homolog from Leishmania infantum.